Here is a 96-residue protein sequence, read N- to C-terminus: MAPFPLKSFIPPQVANPTALNAFPSSARMGRIVDFYSRLPHGPAPKKSSNSFFSWYYKKYLGKNASGAPLLHLVGAVLVFSYASEYYYHIRHHEEH.

Belongs to the ATPase F chain family.

The protein resides in the mitochondrion. It is found in the mitochondrion inner membrane. Functionally, mitochondrial membrane ATP synthase (F(1)F(0) ATP synthase or Complex V) produces ATP from ADP in the presence of a proton gradient across the membrane which is generated by electron transport complexes of the respiratory chain. F-type ATPases consist of two structural domains, F(1) - containing the extramembraneous catalytic core and F(0) - containing the membrane proton channel, linked together by a central stalk and a peripheral stalk. During catalysis, ATP synthesis in the catalytic domain of F(1) is coupled via a rotary mechanism of the central stalk subunits to proton translocation. The sequence is that of ATP synthase subunit f, mitochondrial (atp17) from Schizosaccharomyces pombe (strain 972 / ATCC 24843) (Fission yeast).